Consider the following 299-residue polypeptide: Putative ankyrin repeat protein R864 (299 aa).

ANK repeat units follow at residues 78–107 (SLNKCLLDSCNKGQLKIVQHLINIGANIES), 108–137 (NNNYAVLLASGGGHLEVVKYLVSQGANIKS), 139–167 (NNRVVGWASQHGRLEVVKYLVSLGADIRS), 168–197 (NDDYAVRWASEHGHLEVAKYLVSLGADIRS), 199–227 (YYYILCGASQNGYLEIIKYIVSLGADIRA), 228–257 (YNNCAVKWASQCGHIDIVKYLASQGADIRN), and 258–287 (DNDYCVGLASKNGHIEVVKYLVSQGADIKT).

In Acanthamoeba polyphaga mimivirus (APMV), this protein is Putative ankyrin repeat protein R864.